The chain runs to 460 residues: Nuclear transport factor 2 (460 aa).

The NTF2 domain maps to 15–131; it reads VGRAFVEQYY…YFVLNDVFRF (117 aa). Disordered stretches follow at residues 207–226, 238–289, and 361–460; these read EPPT…GDAP, KSSP…VDVE, and RQAV…GGSS. The RRM domain occupies 293–370; it reads HSIYVRNLPF…RQAVVEEKKT (78 aa). The span at 373 to 382 shows a compositional bias: gly residues; sequence RGGGNNGGSR. Residues 383–394 are compositionally biased toward low complexity; sequence GRYFSGRGSFRN. Composition is skewed to gly residues over residues 399–416 and 450–460; these read GGRG…GGEF and GRGGARGGGSS.

In terms of assembly, interacts with MBD6.

It is found in the cytoplasm. Its subcellular location is the nucleus. In terms of biological role, involved in RNA-directed DNA methylation (RdDM). The polypeptide is Nuclear transport factor 2 (Arabidopsis thaliana (Mouse-ear cress)).